Reading from the N-terminus, the 356-residue chain is MMILRLALAIVISTYATAQPASTSSLVTYIFGDSLTEVGNNNFLQYSLARADFPYYGVDFSGGKATGRFTNGRTIGDIISTKLGILSPPPYLSLSQNDDAFLSGINYASGGAGILNETGIYFIQRLTFNDQINCFKKTKEVIRAKIGDGAANKHVNDAMYFIGLGSNDYVNNFLQPFMADGQQYTHDEFVELLTSTLHNQLTTIYKLGARKVIFHGLGPLGCIPSQRVKSKTRMCLNRVNEWVLEFNSRTKKLLIDLNKRLPGAKFSFADTYPAVLDLINNPTHYGFKIANTSCCNVDTSVGGLCLPNSKMCKNRQDFVFWDAFHPSDSANQILADHLFSSLLSSSSPSPAPKPRQ.

Residues 1–18 form the signal peptide; sequence MMILRLALAIVISTYATA. Ser34 serves as the catalytic Nucleophile. 2 N-linked (GlcNAc...) asparagine glycosylation sites follow: Asn116 and Asn291. Active-site residues include Asp322 and His325.

Belongs to the 'GDSL' lipolytic enzyme family.

It localises to the secreted. This Arabidopsis thaliana (Mouse-ear cress) protein is GDSL esterase/lipase At5g37690.